Consider the following 218-residue polypeptide: Octanoyltransferase (218 aa).

In terms of domain architecture, BPL/LPL catalytic spans 30 to 213 (GEIEDTLILV…YFSEVFNYDI (184 aa)). Substrate contacts are provided by residues 75-82 (RGGDVTYH), 143-145 (AIG), and 156-158 (GFA). Residue Cys-174 is the Acyl-thioester intermediate of the active site.

This sequence belongs to the LipB family.

The protein localises to the cytoplasm. It catalyses the reaction octanoyl-[ACP] + L-lysyl-[protein] = N(6)-octanoyl-L-lysyl-[protein] + holo-[ACP] + H(+). The protein operates within protein modification; protein lipoylation via endogenous pathway; protein N(6)-(lipoyl)lysine from octanoyl-[acyl-carrier-protein]: step 1/2. Functionally, catalyzes the transfer of endogenously produced octanoic acid from octanoyl-acyl-carrier-protein onto the lipoyl domains of lipoate-dependent enzymes. Lipoyl-ACP can also act as a substrate although octanoyl-ACP is likely to be the physiological substrate. This Alkaliphilus metalliredigens (strain QYMF) protein is Octanoyltransferase.